A 148-amino-acid polypeptide reads, in one-letter code: HTH-type transcriptional regulator Ptr1 (148 aa).

Positions 2–63 constitute an HTH asnC-type domain; sequence LDRIDLKILR…SINPKNLGFE (62 aa). Positions 21 to 40 form a DNA-binding region, H-T-H motif; sequence FREIGRELGISEGTVRNRVK.

Homodimer.

Participates in positive as well as negative regulation of transcription. Binds to its own promoter. The chain is HTH-type transcriptional regulator Ptr1 (ptr1) from Methanocaldococcus jannaschii (strain ATCC 43067 / DSM 2661 / JAL-1 / JCM 10045 / NBRC 100440) (Methanococcus jannaschii).